Here is a 594-residue protein sequence, read N- to C-terminus: DNA ligase (594 aa).

NAD(+) is bound by residues 32 to 36 (DEEYD), 81 to 82 (SL), and glutamate 118. The active-site N6-AMP-lysine intermediate is lysine 120. Residues arginine 141, glutamate 181, lysine 299, and lysine 323 each coordinate NAD(+). 4 residues coordinate Zn(2+): cysteine 417, cysteine 420, cysteine 436, and cysteine 442.

Belongs to the NAD-dependent DNA ligase family. LigA subfamily. The cofactor is Mg(2+). Mn(2+) serves as cofactor.

The enzyme catalyses NAD(+) + (deoxyribonucleotide)n-3'-hydroxyl + 5'-phospho-(deoxyribonucleotide)m = (deoxyribonucleotide)n+m + AMP + beta-nicotinamide D-nucleotide.. DNA ligase that catalyzes the formation of phosphodiester linkages between 5'-phosphoryl and 3'-hydroxyl groups in double-stranded DNA using NAD as a coenzyme and as the energy source for the reaction. It is essential for DNA replication and repair of damaged DNA. The sequence is that of DNA ligase from Blochmanniella floridana.